The chain runs to 314 residues: Olfactory receptor 5G3 (314 aa).

Residues 1-24 (MEDKNQTVVTEFLLLGLTDHPYQK) are Extracellular-facing. The N-linked (GlcNAc...) asparagine glycan is linked to Asn-5. Residues 25 to 45 (IVLFFMFLFVYLITLGGNLGM) form a helical membrane-spanning segment. Residues 46–97 (ITLIWIDPRLHTPMYFFLRHLSFVDICSSSSVVPKMLCNIFAEKKDITFLGC) are Cytoplasmic-facing. Cys-97 and Cys-179 form a disulfide bridge. The chain crosses the membrane as a helical span at residues 98–118 (AAQMWFFGLFEAAECFLLAAM). The Extracellular portion of the chain corresponds to 119-143 (AYDRYVAICKPLLYTLIMSQQVCMQ). Residues 144–164 (LVVGPYAMALISTMTHTIFTF) traverse the membrane as a helical segment. Residues 165–167 (CLP) are Cytoplasmic-facing. A helical membrane pass occupies residues 168–188 (FCGSNIINHFFCDIFPLLSLA). At 189–196 (CADTWVNK) the chain is on the extracellular side. A helical transmembrane segment spans residues 197-217 (FVLFVLAGAIGVLSGLIIMVS). At 218 to 237 (YICILMTILKIQTADGKQKA) the chain is on the cytoplasmic side. A helical membrane pass occupies residues 238–258 (FFTCFSHLAAVSILYGTLFLI). The Extracellular portion of the chain corresponds to 259 to 268 (YVRPSSSSSL). A helical transmembrane segment spans residues 269 to 289 (GIYKVISLFYTVVIPMVNPLI). The Cytoplasmic portion of the chain corresponds to 290 to 314 (YSLRNKEVKDAFRRKIERKKFIIGR).

The protein belongs to the G-protein coupled receptor 1 family.

It localises to the cell membrane. Odorant receptor. In Homo sapiens (Human), this protein is Olfactory receptor 5G3 (OR5G3).